The primary structure comprises 327 residues: Sphingomyelin synthase-related 2 (327 aa).

The next 5 membrane-spanning stretches (helical) occupy residues Leu-54–Val-74, Ala-99–Phe-119, Val-131–Val-151, Leu-192–Phe-212, and Leu-220–Leu-240. Residue His-201 is part of the active site. Topologically, residues Ala-241–Glu-327 are cytoplasmic. Catalysis depends on residues His-244 and Asp-248.

It belongs to the sphingomyelin synthase family.

It localises to the membrane. The polypeptide is Sphingomyelin synthase-related 2 (Caenorhabditis elegans).